A 96-amino-acid polypeptide reads, in one-letter code: Cobalt transport protein CbiN (96 aa).

A run of 2 helical transmembrane segments spans residues 4–24 and 59–79; these read WLAA…VSAG and IESL…GYYL.

This sequence belongs to the CbiN family. Forms an energy-coupling factor (ECF) transporter complex composed of an ATP-binding protein (A component, CbiO), a transmembrane protein (T component, CbiQ) and 2 possible substrate-capture proteins (S components, CbiM and CbiN) of unknown stoichimetry.

Its subcellular location is the cell membrane. The protein operates within cofactor biosynthesis; adenosylcobalamin biosynthesis. Its function is as follows. Part of the energy-coupling factor (ECF) transporter complex CbiMNOQ involved in cobalt import. This is Cobalt transport protein CbiN from Halobacterium salinarum (strain ATCC 29341 / DSM 671 / R1).